The following is a 192-amino-acid chain: Orotate phosphoribosyltransferase (192 aa).

116–124 (EDIVTTGLS) provides a ligand contact to 5-phospho-alpha-D-ribose 1-diphosphate. Residues Thr-120 and Arg-148 each contribute to the orotate site.

This sequence belongs to the purine/pyrimidine phosphoribosyltransferase family. PyrE subfamily. As to quaternary structure, homodimer. The cofactor is Mg(2+).

The catalysed reaction is orotidine 5'-phosphate + diphosphate = orotate + 5-phospho-alpha-D-ribose 1-diphosphate. Its pathway is pyrimidine metabolism; UMP biosynthesis via de novo pathway; UMP from orotate: step 1/2. Catalyzes the transfer of a ribosyl phosphate group from 5-phosphoribose 1-diphosphate to orotate, leading to the formation of orotidine monophosphate (OMP). In Bartonella bacilliformis (strain ATCC 35685 / KC583 / Herrer 020/F12,63), this protein is Orotate phosphoribosyltransferase.